The following is a 78-amino-acid chain: NAD(P)H-quinone oxidoreductase subunit O (78 aa).

It belongs to the complex I NdhO subunit family. As to quaternary structure, NDH-1 can be composed of about 15 different subunits; different subcomplexes with different compositions have been identified which probably have different functions.

The protein resides in the cellular thylakoid membrane. It catalyses the reaction a plastoquinone + NADH + (n+1) H(+)(in) = a plastoquinol + NAD(+) + n H(+)(out). It carries out the reaction a plastoquinone + NADPH + (n+1) H(+)(in) = a plastoquinol + NADP(+) + n H(+)(out). Its function is as follows. NDH-1 shuttles electrons from an unknown electron donor, via FMN and iron-sulfur (Fe-S) centers, to quinones in the respiratory and/or the photosynthetic chain. The immediate electron acceptor for the enzyme in this species is believed to be plastoquinone. Couples the redox reaction to proton translocation, and thus conserves the redox energy in a proton gradient. Cyanobacterial NDH-1 also plays a role in inorganic carbon-concentration. The chain is NAD(P)H-quinone oxidoreductase subunit O from Prochlorococcus marinus (strain MIT 9215).